The sequence spans 140 residues: Large ribosomal subunit protein uL11 (140 aa).

It belongs to the universal ribosomal protein uL11 family. In terms of assembly, part of the ribosomal stalk of the 50S ribosomal subunit. Interacts with L10 and the large rRNA to form the base of the stalk. L10 forms an elongated spine to which L12 dimers bind in a sequential fashion forming a multimeric L10(L12)X complex. Post-translationally, one or more lysine residues are methylated.

Functionally, forms part of the ribosomal stalk which helps the ribosome interact with GTP-bound translation factors. The polypeptide is Large ribosomal subunit protein uL11 (Nitratidesulfovibrio vulgaris (strain ATCC 29579 / DSM 644 / CCUG 34227 / NCIMB 8303 / VKM B-1760 / Hildenborough) (Desulfovibrio vulgaris)).